The sequence spans 305 residues: tRNA dimethylallyltransferase (305 aa).

13–20 (GPTSSGKT) contacts ATP. 15 to 20 (TSSGKT) is a substrate binding site. Residues 39–42 (DSKQ) form an interaction with substrate tRNA region.

Belongs to the IPP transferase family. Monomer. Requires Mg(2+) as cofactor.

It carries out the reaction adenosine(37) in tRNA + dimethylallyl diphosphate = N(6)-dimethylallyladenosine(37) in tRNA + diphosphate. Its function is as follows. Catalyzes the transfer of a dimethylallyl group onto the adenine at position 37 in tRNAs that read codons beginning with uridine, leading to the formation of N6-(dimethylallyl)adenosine (i(6)A). This chain is tRNA dimethylallyltransferase, found in Neorickettsia sennetsu (strain ATCC VR-367 / Miyayama) (Ehrlichia sennetsu).